The primary structure comprises 334 residues: Dihydroorotate dehydrogenase (quinone) (334 aa).

Residues 59-63 (AGLDK) and Thr-83 each bind FMN. Lys-63 contacts substrate. Position 108 to 112 (108 to 112 (NRMGF)) interacts with substrate. Positions 136 and 169 each coordinate FMN. Asn-169 lines the substrate pocket. Ser-172 (nucleophile) is an active-site residue. Residue Asn-174 participates in substrate binding. Positions 214 and 242 each coordinate FMN. Position 243-244 (243-244 (NT)) interacts with substrate. FMN-binding positions include Gly-265, Gly-294, and 315–316 (YS).

Belongs to the dihydroorotate dehydrogenase family. Type 2 subfamily. Monomer. The cofactor is FMN.

It is found in the cell membrane. The enzyme catalyses (S)-dihydroorotate + a quinone = orotate + a quinol. Its pathway is pyrimidine metabolism; UMP biosynthesis via de novo pathway; orotate from (S)-dihydroorotate (quinone route): step 1/1. Its function is as follows. Catalyzes the conversion of dihydroorotate to orotate with quinone as electron acceptor. The polypeptide is Dihydroorotate dehydrogenase (quinone) (Acinetobacter baumannii (strain AB0057)).